The primary structure comprises 72 residues: 3-deoxy-manno-octulosonate cytidylyltransferase (72 aa).

Belongs to the KdsB family. As to quaternary structure, homodimer.

It is found in the cytoplasm. The catalysed reaction is 3-deoxy-alpha-D-manno-oct-2-ulosonate + CTP = CMP-3-deoxy-beta-D-manno-octulosonate + diphosphate. It participates in nucleotide-sugar biosynthesis; CMP-3-deoxy-D-manno-octulosonate biosynthesis; CMP-3-deoxy-D-manno-octulosonate from 3-deoxy-D-manno-octulosonate and CTP: step 1/1. The protein operates within bacterial outer membrane biogenesis; lipopolysaccharide biosynthesis. In terms of biological role, activates KDO (a required 8-carbon sugar) for incorporation into bacterial lipopolysaccharide in Gram-negative bacteria. This is 3-deoxy-manno-octulosonate cytidylyltransferase (kpsU) from Escherichia coli.